The sequence spans 101 residues: Anti-sigma factor RshA (101 aa).

The segment at Asp-9–Asp-15 is inhibits SigH sigma factor activity. Cys-23 serves as a coordination point for iron-sulfur cluster. Inhibits SigH sigma factor activity stretches follow at residues Ala-28–Leu-34 and Cys-38–Glu-44. Residues His-49, Cys-53, and Cys-56 each coordinate iron-sulfur cluster. Thr-94 is modified (phosphothreonine).

Belongs to the zinc-associated anti-sigma factor (ZAS) superfamily. Interacts with cognate sigma factor SigH under reducing conditions. Binding inhibits the interaction of SigH with the RNA polymerase catalytic core. The cofactor is iron-sulfur cluster. Phosphorylated, probably by PknB. Phosphorylation decreases interaction with SigH, leading to increased SigH-mediated transcription.

In terms of biological role, an redox-regulated anti-sigma factor for extracytoplasmic function (ECF) sigma factor SigH. ECF sigma factors are held in an inactive form by a cognate anti-sigma factor. RshA and some peptides derived from it inhibit the sigma factor activity of SigH. Probably releases SigH during oxidative stress. The chain is Anti-sigma factor RshA (rshA) from Mycobacterium tuberculosis (strain CDC 1551 / Oshkosh).